An 806-amino-acid chain; its full sequence is Leucine--tRNA ligase (806 aa).

The 'HIGH' region signature appears at 40–51 (PYPSGTGLHVGH). The short motif at 576 to 580 (KMSKS) is the 'KMSKS' region element. Residue Lys-579 coordinates ATP.

The protein belongs to the class-I aminoacyl-tRNA synthetase family.

The protein resides in the cytoplasm. It catalyses the reaction tRNA(Leu) + L-leucine + ATP = L-leucyl-tRNA(Leu) + AMP + diphosphate. In Prosthecochloris aestuarii (strain DSM 271 / SK 413), this protein is Leucine--tRNA ligase.